The following is a 194-amino-acid chain: Cupin-domain-containing oxidoreductase virC (194 aa).

A Cupin type-2 domain is found at 106-175 (IDFAPNVISP…GTLPGRMMWV (70 aa)).

The protein belongs to the virC family.

It participates in secondary metabolite biosynthesis. Its function is as follows. Cupin-domain-containing oxidoreductase; part of the gene cluster that mediates the biosynthesis of virensols and trichoxide, fungal natural products that contain or are derived from a salicylaldehyde core. The pathway begins with the synthesis of the reduced chain in virensol C by the highly reducing polyketide synthase virA via condensation of one acetate and 8 malonate units. VirA has interesting programming rules since the first 2 ketides are fully reduced, the 3 following ketides undergo beta-dehydration, and the last 3 ketides are only reduced to beta-hydroxys to yield the trihydroxy portion. The production of aldehyde virensol C by virA alone is surprising, since virA does not contain a reductase (R) domain that is typically associated with reductive product release in HRPKS. The cupin-domain enzyme virC is involved in enhancing virA product turnover. The short-chain dehydrogenase virB then oxidizes the C-7 alcohol of virensol C to a ketone, yielding virensol D. Virensol D is further transformed to salicylaldehyde 5-deoxyaurocitrin by the short-chain dehydrogenase virD. VirD catalyzes the dehydrogenation of C-3 to form the beta-ketone aldehyde, which is followed by the generation of the nucleophilic C-2 that is required for the intramolecular aldol condensation between C-2 and C-7, itself followed by dehydration and aromatization which leads to salicylaldehyde 5-deoxyaurocitrin. While the dehydrogenation of virensol D is definitely catalyzed by virD, the aldol condensation and dehydration may be uncatalyzed or assisted by virD. The short chain dehydrogenase virG then converts salicylaldehyde 5-deoxyaurocitrin into virensol B which is further hydroxylated by the cytochrome P450 monooxygenase virE to yield the hydroquinone virensol A. VirI then may oxidize virensol A to form the quinone, while virH performs the epoxidation. Finally, the two remaining short-chain dehydrogenases, virK and virL, are probably responsible for reducing the ketones to the corresponding alcohols to furnish the epoxycyclohexanol structure in trichoxide. This Hypocrea virens (strain Gv29-8 / FGSC 10586) (Gliocladium virens) protein is Cupin-domain-containing oxidoreductase virC.